A 272-amino-acid polypeptide reads, in one-letter code: uncharacterized protein (272 aa).

This is an uncharacterized protein from Sinorhizobium fredii (strain NBRC 101917 / NGR234).